The following is a 189-amino-acid chain: Protein Rex (189 aa).

Over residues 1 to 16 the composition is skewed to basic residues; that stretch reads MPKTRRRPRRSQRKRP. Residues 1–28 form a disordered region; the sequence is MPKTRRRPRRSQRKRPPTPWPTSQGLDR. Positions 2–18 match the Nuclear localization signal, and RNA-binding (RxRE) motif; it reads PKTRRRPRRSQRKRPPT. Residues 56–70 are homomultimerization; sequence RPVYIVTPYWPPVQS. Ser-70 carries the post-translational modification Phosphoserine; by host. The Nuclear export signal signature appears at 82 to 93; that stretch reads LSAQLYSSLSLD. Residues 84–94 are compositionally biased toward low complexity; that stretch reads AQLYSSLSLDS. A disordered region spans residues 84–189; sequence AQLYSSLSLD…PPSPGPSCPT (106 aa). The segment covering 111–125 has biased composition (pro residues); sequence RRPPIQPPTFHPPSS. The tract at residues 123 to 131 is homomultimerization; that stretch reads PSSRPCANT. Over residues 127 to 164 the composition is skewed to polar residues; the sequence is PCANTPPSETDTWNPPLGSTSQPCLFQTPASGPKTCTP. Thr-174 carries the phosphothreonine; by host modification. Ser-177 is modified (phosphoserine; by host). Positions 178–189 are enriched in pro residues; the sequence is FPPPSPGPSCPT.

It belongs to the deltaretrovirus Rex protein family. As to quaternary structure, homomultimer. Multimeric assembly is essential for activity and involves XPO1. Binds to human XPO1 and KPNB1. Interacts (via N-terminal nuclear localization signal) with human NPM1. Phosphorylated.

It localises to the host nucleus. The protein localises to the host nucleolus. Its subcellular location is the host cytoplasm. Functionally, rex escorts unspliced gag-pro-pol and singly spliced env mRNAs out of the nucleus of infected cells. These mRNAs carry a recognition sequence called Rex responsive element (RxRE or XRE) located at the 3' region of the long terminal repeat (LTR). This function is essential since most HTLV proteins are translated from unspliced or partially spliced pre-mRNAs that cannot exit the nucleus by the pathway used by fully processed cellular mRNAs. Rex itself is translated from a fully spliced mRNA that probably readily exits the nucleus. Rex's nuclear localization signal (NLS) binds directly to KPNB1/importin beta-1 without previous binding to KPNA1/importin alpha-1. KPNB1 binds to the GDP bound form of RAN (Ran-GDP) and targets Rex to the nucleus. In the nucleus, the conversion from Ran-GDP to Ran-GTP dissociates Rex from KPNB1 and allows Rex's binding to the RRE in viral pre-mRNAs. Rex multimerizes on the RRE via cooperative assembly. This multimerization is critical for its full biological activity, since it may shield the viral RNA from being spliced or down-regulated, and probably exposes Rex's nuclear export signal (NES) to the surface. Rex can then form a complex with XPO1/CRM1, RANBP3 and Ran-GTP, leading to nuclear export of the complex. Conversion from Ran-GTP to Ran-GDP mediates dissociation of the Rex/RRE/XPO1/RANBP3/RAN complex, so that Rex can return to the nucleus for a subsequent round of export. The polypeptide is Protein Rex (Homo sapiens (Human)).